A 411-amino-acid polypeptide reads, in one-letter code: Arginine deiminase (411 aa).

The active-site Amidino-cysteine intermediate is the Cys-401.

It belongs to the arginine deiminase family.

The protein localises to the cytoplasm. The catalysed reaction is L-arginine + H2O = L-citrulline + NH4(+). It participates in amino-acid degradation; L-arginine degradation via ADI pathway; carbamoyl phosphate from L-arginine: step 1/2. The polypeptide is Arginine deiminase (Staphylococcus epidermidis (strain ATCC 35984 / DSM 28319 / BCRC 17069 / CCUG 31568 / BM 3577 / RP62A)).